The following is a 171-amino-acid chain: Putative RING finger protein 027R (171 aa).

The RING-type zinc-finger motif lies at 121-163; the sequence is CAVCMTNPVWVDFVWSCKHISTCIKCLKMLSRGSNGFKCPICR.

Belongs to the IIV-6 157L family.

The chain is Putative RING finger protein 027R from Aedes vexans (Inland floodwater mosquito).